Consider the following 29-residue polypeptide: Brevinin-2Ed (29 aa).

Cys23 and Cys29 form a disulfide bridge.

It belongs to the frog skin active peptide (FSAP) family. Brevinin subfamily. Expressed by the skin glands.

It localises to the secreted. Its function is as follows. Shows antibacterial activity against representative Gram-negative and Gram-positive bacterial species, and hemolytic activity. The protein is Brevinin-2Ed of Pelophylax lessonae (Pool frog).